A 764-amino-acid polypeptide reads, in one-letter code: Phenylalanine--tRNA ligase beta subunit (764 aa).

The 111-residue stretch at 38 to 148 (CIAPKNVVVG…GELVLGKELH (111 aa)) folds into the tRNA-binding domain. One can recognise a B5 domain in the interval 375–455 (LKDCALTFQL…RFVGIDNLVS (81 aa)). 4 residues coordinate Mg(2+): Asp-433, Asp-439, Glu-442, and Glu-443. An FDX-ACB domain is found at 673–763 (SIYPSSVRDL…LEKEFNARLK (91 aa)).

Belongs to the phenylalanyl-tRNA synthetase beta subunit family. Type 1 subfamily. In terms of assembly, tetramer of two alpha and two beta subunits. Mg(2+) serves as cofactor.

Its subcellular location is the cytoplasm. The enzyme catalyses tRNA(Phe) + L-phenylalanine + ATP = L-phenylalanyl-tRNA(Phe) + AMP + diphosphate + H(+). The protein is Phenylalanine--tRNA ligase beta subunit (pheT) of Helicobacter pylori (strain J99 / ATCC 700824) (Campylobacter pylori J99).